A 690-amino-acid chain; its full sequence is MKKHLHHKVSGSCDPGDRSPKEKGRSQGIRNLLILISLSIIPYLSCLGGDFVFDDAESIVNNPIVNGKDPLLQIFSRDFWGRSISSSNSHKSYRPVTTFTFWLNYKLHETSTLGYHVVNIICHTVATLVFYKLGKQLEHIFDFFNIAFSASILFAVHPVHTEAVANITGRAELLMTIFSLAALILHVKNREINCKFVLLVILSTLSKEQGLMTIPIAICIDFLAHRSCRSNFVRMICLLVAIGFLRMMVNGFEAAKFTKLDNPTAFLNSKFYRMINYTYIWLYHAYLLVIPVNLCFDYSMGCISSITTMWDLRALSPVLIFTIVIIGVKFQNECRAFTLSSLMGIISFLPASNIFFTVGFSIAERVLYLPSAGFCLLCAIIFKKLSVHFKNADVLSITLILLLISKTYRRSGEWKTELSLYSSGLSVCPTNAKIHYNLGKVLGDNGLTKDAEKNYWNAIKLDPSYEQALNNLGNLLEKSGDSKTAESLLARAVTLRPSFAVAWMNLGISQMNLKKYYEAEKSLKNSLLIRPNSAHCLFNLGVLYQRTNRDEMAMSAWKNATRIDPSHSQSWTNLFVVLDHLSQCSQVIDLSYQALSSVPNESRVHMQIGSCHAKHSNFTAAENHIKSAIDLNPTSVLFHANLGILYQRMSRHKEAESQYRIVLALDSKNIVAKQNLQKLEEHNCYNSTLP.

A disordered region spans residues 1–24 (MKKHLHHKVSGSCDPGDRSPKEKG). Residues 1 to 32 (MKKHLHHKVSGSCDPGDRSPKEKGRSQGIRNL) lie on the Cytoplasmic side of the membrane. Positions 15 to 24 (PGDRSPKEKG) are enriched in basic and acidic residues. The chain crosses the membrane as a helical span at residues 33–53 (LILISLSIIPYLSCLGGDFVF). Residues 54-110 (DDAESIVNNPIVNGKDPLLQIFSRDFWGRSISSSNSHKSYRPVTTFTFWLNYKLHET) are Extracellular-facing. A helical membrane pass occupies residues 111–131 (STLGYHVVNIICHTVATLVFY). The Cytoplasmic segment spans residues 132–138 (KLGKQLE). A helical membrane pass occupies residues 139-159 (HIFDFFNIAFSASILFAVHPV). The Extracellular portion of the chain corresponds to 160 to 166 (HTEAVAN). Residue Asn166 is glycosylated (N-linked (GlcNAc...) asparagine). Residues 167–187 (ITGRAELLMTIFSLAALILHV) traverse the membrane as a helical segment. At 188–234 (KNREINCKFVLLVILSTLSKEQGLMTIPIAICIDFLAHRSCRSNFVR) the chain is on the cytoplasmic side. A helical transmembrane segment spans residues 235-255 (MICLLVAIGFLRMMVNGFEAA). The Extracellular portion of the chain corresponds to 256–273 (KFTKLDNPTAFLNSKFYR). A helical transmembrane segment spans residues 274 to 294 (MINYTYIWLYHAYLLVIPVNL). Over 295 to 307 (CFDYSMGCISSIT) the chain is Cytoplasmic. Residues 308–328 (TMWDLRALSPVLIFTIVIIGV) traverse the membrane as a helical segment. At 329 to 341 (KFQNECRAFTLSS) the chain is on the extracellular side. The chain crosses the membrane as a helical span at residues 342 to 362 (LMGIISFLPASNIFFTVGFSI). Residues 363–365 (AER) lie on the Cytoplasmic side of the membrane. Residues 366-386 (VLYLPSAGFCLLCAIIFKKLS) traverse the membrane as a helical segment. The Extracellular segment spans residues 387 to 690 (VHFKNADVLS…EHNCYNSTLP (304 aa)). TPR repeat units lie at residues 398-431 (TLIL…CPTN), 432-465 (AKIH…DPSY), 466-499 (EQAL…RPSF), 500-533 (AVAW…RPNS), and 534-567 (AHCL…DPSH). N-linked (GlcNAc...) asparagine glycans are attached at residues Asn559, Asn600, and Asn617. TPR repeat units follow at residues 602 to 635 (SRVH…NPTS) and 636 to 669 (VLFH…DSKN). Residue Asn686 is glycosylated (N-linked (GlcNAc...) asparagine).

It belongs to the TMTC family.

The protein localises to the membrane. The protein resides in the endoplasmic reticulum. The enzyme catalyses a di-trans,poly-cis-dolichyl beta-D-mannosyl phosphate + L-seryl-[protein] = 3-O-(alpha-D-mannosyl)-L-seryl-[protein] + a di-trans,poly-cis-dolichyl phosphate + H(+). It carries out the reaction a di-trans,poly-cis-dolichyl beta-D-mannosyl phosphate + L-threonyl-[protein] = 3-O-(alpha-D-mannosyl)-L-threonyl-[protein] + a di-trans,poly-cis-dolichyl phosphate + H(+). Its pathway is protein modification; protein glycosylation. Transfers mannosyl residues to the hydroxyl group of serine or threonine residues. This chain is Protein O-mannosyl-transferase F38B6.6, found in Caenorhabditis elegans.